The primary structure comprises 298 residues: Protein ILRUN (298 aa).

Positions 199–277 (NTQPHRKVEG…SVNLSPSSHA (79 aa)) are disordered. A phosphoserine mark is found at Ser215 and Ser222. Positions 242-255 (TWAPAPDTWAPAPD) are enriched in low complexity. The segment covering 262-277 (NRLSQNSVNLSPSSHA) has biased composition (polar residues). Ser272 carries the phosphoserine modification.

In terms of assembly, interacts with IRF3; the interaction inhibits IRF3 binding to its DNA consensus sequence. In terms of tissue distribution, expressed in lung (at protein level).

The protein localises to the cytoplasm. The protein resides in the nucleus. Functionally, negative regulator of innate antiviral response. Blocks IRF3-dependent cytokine production such as IFNA, IFNB and TNF. Interacts with IRF3 and inhibits IRF3 recruitment to type I IFN promoter sequences while also reducing nuclear levels of the coactivators EP300 and CREBBP. The chain is Protein ILRUN from Homo sapiens (Human).